We begin with the raw amino-acid sequence, 316 residues long: FAD:protein FMN transferase (316 aa).

Residues methionine 14, 88–90 (AFN), and aspartate 146 contribute to the FAD site. Alanine 149 contacts Mg(2+). Lysine 152 and leucine 231 together coordinate FAD. Mg(2+) is bound by residues aspartate 257 and threonine 261.

It belongs to the ApbE family. Mg(2+) is required as a cofactor.

Its subcellular location is the cytoplasm. It carries out the reaction L-threonyl-[protein] + FAD = FMN-L-threonyl-[protein] + AMP + H(+). Flavin transferase that catalyzes the transfer of the FMN moiety of FAD and its covalent binding to the hydroxyl group of a threonine residue in a target flavoprotein. Is responsible for the modification of the fumarate reductase KPK_2907. This Klebsiella pneumoniae (strain 342) protein is FAD:protein FMN transferase.